Reading from the N-terminus, the 419-residue chain is S-adenosylmethionine synthase (419 aa).

Position 15 (His-15) interacts with ATP. Asp-17 contacts Mg(2+). Glu-43 contacts K(+). Positions 56 and 100 each coordinate L-methionine. Residues Gln-100–Glu-110 form a flexible loop region. Residues Asp-171–Lys-173, Lys-248–Phe-249, Asp-257, Arg-263–Lys-264, Ala-280, and Lys-284 contribute to the ATP site. Asp-257 contributes to the L-methionine binding site. Residue Lys-288 participates in L-methionine binding.

This sequence belongs to the AdoMet synthase family. As to quaternary structure, homotetramer; dimer of dimers. The cofactor is Mg(2+). It depends on K(+) as a cofactor.

Its subcellular location is the cytoplasm. It carries out the reaction L-methionine + ATP + H2O = S-adenosyl-L-methionine + phosphate + diphosphate. It participates in amino-acid biosynthesis; S-adenosyl-L-methionine biosynthesis; S-adenosyl-L-methionine from L-methionine: step 1/1. In terms of biological role, catalyzes the formation of S-adenosylmethionine (AdoMet) from methionine and ATP. The overall synthetic reaction is composed of two sequential steps, AdoMet formation and the subsequent tripolyphosphate hydrolysis which occurs prior to release of AdoMet from the enzyme. The polypeptide is S-adenosylmethionine synthase (Parasynechococcus marenigrum (strain WH8102)).